Reading from the N-terminus, the 185-residue chain is Ribosome-recycling factor (185 aa).

Belongs to the RRF family.

Its subcellular location is the cytoplasm. Its function is as follows. Responsible for the release of ribosomes from messenger RNA at the termination of protein biosynthesis. May increase the efficiency of translation by recycling ribosomes from one round of translation to another. The protein is Ribosome-recycling factor of Buchnera aphidicola subsp. Schizaphis graminum (strain Sg).